The following is a 284-amino-acid chain: Sulfotransferase 2A6 (284 aa).

Position 43-48 (43-48) interacts with 3'-phosphoadenylyl sulfate; sequence KSGTNW. H98 serves as the catalytic Proton acceptor. Residues R120, S128, Y183, 217 to 222, and 246 to 248 each bind 3'-phosphoadenylyl sulfate; these read SSFQVM and RNG.

The protein belongs to the sulfotransferase 1 family. As to quaternary structure, oligomer. As to expression, liver, exhibiting a sex-dependent spatial localization in the lobule of the liver.

The protein localises to the cytoplasm. It is found in the cytosol. The enzyme catalyses an alcohol + 3'-phosphoadenylyl sulfate = an alkyl sulfate + adenosine 3',5'-bisphosphate + H(+). It carries out the reaction glycolithocholate + 3'-phosphoadenylyl sulfate = sulfoglycolithocholate + adenosine 3',5'-bisphosphate + H(+). The catalysed reaction is taurolithocholate + 3'-phosphoadenylyl sulfate = taurolithocholate 3-sulfate + adenosine 3',5'-bisphosphate + H(+). It catalyses the reaction 3beta-hydroxyandrost-5-en-17-one + 3'-phosphoadenylyl sulfate = dehydroepiandrosterone 3-sulfate + adenosine 3',5'-bisphosphate + H(+). The enzyme catalyses 3beta-hydroxy-5-cholenate + 3'-phosphoadenylyl sulfate = 3beta-sulfo-5-cholenate + adenosine 3',5'-bisphosphate + H(+). It carries out the reaction deoxycholate + 3'-phosphoadenylyl sulfate = 3alpha-sulfodeoxycholate + adenosine 3',5'-bisphosphate + H(+). The catalysed reaction is glycodeoxycholate + 3'-phosphoadenylyl sulfate = 3alpha-sulfoglycodeoxycholate + adenosine 3',5'-bisphosphate + H(+). It catalyses the reaction taurodeoxycholate + 3'-phosphoadenylyl sulfate = 3alpha-sulfotaurodeoxycholate + adenosine 3',5'-bisphosphate + H(+). Sulfotransferase that utilizes 3'-phospho-5'-adenylyl sulfate (PAPS) as sulfonate donor to catalyze the sulfonation of the hydroxyl group of hydroxysteroids and bile acids. Prefered substrates are dehydroepiandrosterone (DHEA, also known as 3beta-hydroxyandrost-5-en-17-one) and 3beta-hydroxy-5-cholenoate, but can also catalyze deoxycholate and its conjugates, and lithocholate conjugates, in vitro. The protein is Sulfotransferase 2A6 of Rattus norvegicus (Rat).